A 444-amino-acid polypeptide reads, in one-letter code: Argininosuccinate synthase (444 aa).

Residues 17–25 (AFSGGLDTS) and Ala-43 each bind ATP. Residue Tyr-99 coordinates L-citrulline. Gly-129 and Thr-131 together coordinate ATP. L-aspartate contacts are provided by Thr-131, Asn-135, and Asp-136. L-citrulline is bound at residue Asn-135. Residue Asp-136 participates in ATP binding. L-citrulline contacts are provided by Arg-139 and Ser-192. Asp-194 is a binding site for ATP. Positions 201, 203, and 280 each coordinate L-citrulline.

The protein belongs to the argininosuccinate synthase family. Type 2 subfamily. In terms of assembly, homotetramer.

It localises to the cytoplasm. The catalysed reaction is L-citrulline + L-aspartate + ATP = 2-(N(omega)-L-arginino)succinate + AMP + diphosphate + H(+). It functions in the pathway amino-acid biosynthesis; L-arginine biosynthesis; L-arginine from L-ornithine and carbamoyl phosphate: step 2/3. This Delftia acidovorans (strain DSM 14801 / SPH-1) protein is Argininosuccinate synthase.